The sequence spans 131 residues: Snaclec bitiscetin subunit alpha (131 aa).

3 cysteine pairs are disulfide-bonded: cysteine 4–cysteine 15, cysteine 32–cysteine 125, and cysteine 100–cysteine 117. The region spanning 11-126 is the C-type lectin domain; the sequence is YKGHCYKVFK…CGEKNPFICK (116 aa).

The protein belongs to the snaclec family. Heterodimer of subunits alpha and beta; disulfide-linked. As to expression, expressed by the venom gland.

The protein localises to the secreted. In terms of biological role, snaclec that binds to von Willebrand factor (VWF) and induces its interaction with GPIbalpha (GP1BA) (via the vWF A1 domain), resulting in platelet aggregation. The chain is Snaclec bitiscetin subunit alpha from Bitis arietans (African puff adder).